We begin with the raw amino-acid sequence, 293 residues long: NAD kinase (293 aa).

Asp-73 acts as the Proton acceptor in catalysis. Residues 73–74 (DG), His-78, 147–148 (ND), Arg-158, Arg-175, Asp-177, 188–193 (TAYALS), and Gln-248 contribute to the NAD(+) site.

This sequence belongs to the NAD kinase family. A divalent metal cation serves as cofactor.

The protein localises to the cytoplasm. The catalysed reaction is NAD(+) + ATP = ADP + NADP(+) + H(+). Functionally, involved in the regulation of the intracellular balance of NAD and NADP, and is a key enzyme in the biosynthesis of NADP. Catalyzes specifically the phosphorylation on 2'-hydroxyl of the adenosine moiety of NAD to yield NADP. The chain is NAD kinase from Nitrosococcus oceani (strain ATCC 19707 / BCRC 17464 / JCM 30415 / NCIMB 11848 / C-107).